Here is a 55-residue protein sequence, read N- to C-terminus: MAKSVREKIKLVSSAGTGHFYTTSKNKRTQTTKLEFKKYDPVVRQHVIYKEAKIK.

It belongs to the bacterial ribosomal protein bL33 family.

The sequence is that of Large ribosomal subunit protein bL33 from Hamiltonella defensa subsp. Acyrthosiphon pisum (strain 5AT).